The following is a 1017-amino-acid chain: Protein HIR2 (1017 aa).

7 WD repeats span residues 10–49 (YHNG…ELSK), 74–117 (CHKS…QLFP), 124–163 (SEVN…FQEL), 167–208 (CHEK…DDTS), 228–271 (PLNV…TNIE), 275–326 (GHDF…PITV), and 330–371 (AVQG…YTFS). The tract at residues 417–561 (ISTTTSSSNT…APSDLPRSNS (145 aa)) is disordered. Acidic residues predominate over residues 473–483 (LDDDIDGDGDD). Composition is skewed to polar residues over residues 518 to 535 (SDST…VTTK) and 545 to 561 (LISS…RSNS).

Belongs to the WD repeat HIR1 family.

Its subcellular location is the nucleus. Functionally, required for replication-independent chromatin assembly and for the periodic repression of histone gene transcription during the cell cycle. The sequence is that of Protein HIR2 (HIR2) from Candida albicans (strain SC5314 / ATCC MYA-2876) (Yeast).